A 415-amino-acid chain; its full sequence is Histidine--tRNA ligase (415 aa).

Belongs to the class-II aminoacyl-tRNA synthetase family. As to quaternary structure, homodimer.

It localises to the cytoplasm. It carries out the reaction tRNA(His) + L-histidine + ATP = L-histidyl-tRNA(His) + AMP + diphosphate + H(+). The protein is Histidine--tRNA ligase of Clostridium perfringens (strain SM101 / Type A).